Reading from the N-terminus, the 1241-residue chain is Phosphorylase b kinase regulatory subunit alpha, skeletal muscle isoform (1241 aa).

S629, S730, S736, S739, S759, S812, S973, S982, and S986 each carry phosphoserine. A calmodulin-binding region spans residues 811 to 841 (LSELYVKVGEIRHWGLIRYISGILRKKVEAL). S1008 carries the post-translational modification Phosphoserine; by autocatalysis. S1019 is subject to Phosphoserine; by PKA. Residues S1021 and S1024 each carry the phosphoserine modification. The interval 1064–1104 (SKDSRQGQWQRRRRLDGALNRVPIGFYQKVWKILQKCHGLS) is calmodulin-binding. Phosphoserine is present on S1131. The S-farnesyl cysteine moiety is linked to residue C1238.

It belongs to the phosphorylase b kinase regulatory chain family. In terms of assembly, hexadecamer of 4 heterotetramers, each composed of alpha, beta, gamma, and delta subunits. Alpha (PHKA1 or PHKA2) and beta (PHKB) are regulatory subunits, gamma (PHKG1 or PHKG2) is the catalytic subunit, and delta is calmodulin. Although the final Cys may be farnesylated, the terminal tripeptide is probably not removed, and the C-terminus is not methylated. As to expression, both isoforms are expressed in muscle.

It is found in the cell membrane. It functions in the pathway glycan biosynthesis; glycogen metabolism. By phosphorylation of various serine residues and by calcium. Phosphorylase b kinase catalyzes the phosphorylation of serine in certain substrates, including troponin I. The alpha chain may bind calmodulin. The sequence is that of Phosphorylase b kinase regulatory subunit alpha, skeletal muscle isoform (Phka1) from Mus musculus (Mouse).